The following is a 763-amino-acid chain: Ribonucleoside-diphosphate reductase subunit alpha (763 aa).

An ATP-cone domain is found at 5-95 (LFVTKRNGKK…IFHLRKKAYG (91 aa)). ATP is bound by residues Lys9, 15-21 (EKINLDK), Thr55, and Lys91. Thr209 contacts GDP. Cys225 and Cys462 form a disulfide bridge. Residues 232 to 234 (DNL), Arg262, and Arg269 each bind dTTP. Asn437 contacts GDP. Catalysis depends on Asn437, which acts as the Proton acceptor. Cys439 (cysteine radical intermediate) is an active-site residue. GDP contacts are provided by residues Glu441 and 623–625 (ETS). Glu441 functions as the Proton acceptor in the catalytic mechanism.

It belongs to the ribonucleoside diphosphate reductase large chain family. In terms of assembly, tetramer of two alpha and two beta subunits.

It carries out the reaction a 2'-deoxyribonucleoside 5'-diphosphate + [thioredoxin]-disulfide + H2O = a ribonucleoside 5'-diphosphate + [thioredoxin]-dithiol. Its activity is regulated as follows. Under complex allosteric control mediated by deoxynucleoside triphosphates and ATP binding to separate specificity and activation sites on the alpha subunit. The type of nucleotide bound at the specificity site determines substrate preference. It seems probable that ATP makes the enzyme reduce CDP and UDP, dGTP favors ADP reduction and dTTP favors GDP reduction. Stimulated by ATP and inhibited by dATP binding to the activity site. Provides the precursors necessary for DNA synthesis. Catalyzes the biosynthesis of deoxyribonucleotides from the corresponding ribonucleotides. The polypeptide is Ribonucleoside-diphosphate reductase subunit alpha (nrdA) (Buchnera aphidicola subsp. Schizaphis graminum (strain Sg)).